Consider the following 210-residue polypeptide: Synaptosomal-associated protein 23 (210 aa).

At M1 the chain carries N-acetylmethionine. Phosphoserine occurs at positions 5, 20, 23, and 34. The t-SNARE coiled-coil homology 1 domain occupies 14-76 (HQVTDESLES…REAEKTLTEL (63 aa)). Residues 23 to 76 (STRRILGLAIESQDAGIKTITMLDEQGEQLNRIEEGMDQINKDMREAEKTLTEL) adopt a coiled-coil conformation. S-palmitoyl cysteine attachment occurs at residues C79, C80, C83, C85, and C87. Positions 104-136 (GDGGDSSPSNVVSKQPSRITNGQPQQTTGAASG) are disordered. The span at 109-133 (SSPSNVVSKQPSRITNGQPQQTTGA) shows a compositional bias: polar residues. A phosphoserine mark is found at S110 and S160. The region spanning 145–207 (DAREDEMEEN…DIANTRAKKL (63 aa)) is the t-SNARE coiled-coil homology 2 domain.

The protein belongs to the SNAP-25 family. As to quaternary structure, homotetramer (via coiled-coil domain), also forms heterotetramers with STX4 and VAMP3. Found in a complex with VAMP8 and STX1A. Found in a complex with VAMP8 and STX4 in pancreas. Interacts simultaneously with SNAPIN and SYN4. Interacts with STX1A. Interacts with STX12. Interacts tightly to multiple syntaxins and synaptobrevins/VAMPs. Interacts with ZDHHC13 (via ANK repeats). Interacts with ZDHHC17 (via ANK repeats).

It is found in the cell membrane. The protein localises to the synapse. Its subcellular location is the synaptosome. The protein resides in the cytoplasmic vesicle membrane. Essential component of the high affinity receptor for the general membrane fusion machinery and an important regulator of transport vesicle docking and fusion. The protein is Synaptosomal-associated protein 23 (Snap23) of Rattus norvegicus (Rat).